The chain runs to 500 residues: Keratin, type II cuticular Hb1 (500 aa).

A head region spans residues 1 to 106; it reads MTCGSGFRGR…PNAQCVKQEE (106 aa). Residues 106-417 enclose the IF rod domain; that stretch reads EKEQIKCLNN…RLLEGEEQRL (312 aa). Residues 107–141 form a coil 1A region; that stretch reads KEQIKCLNNRFAAFIDKVRFLEQQNKLLETKLQFY. Positions 142–151 are linker 1; that stretch reads QNRQCCESNL. The interval 152–252 is coil 1B; sequence EPLFNGYIET…YEEEIRVLQA (101 aa). K212 is covalently cross-linked (Glycyl lysine isopeptide (Lys-Gly) (interchain with G-Cter in SUMO1)). A linker 12 region spans residues 253 to 269; the sequence is HISDTSVIVKMDNSRDL. The tract at residues 270 to 413 is coil 2; sequence NMDNIVAEIK…ATYRRLLEGE (144 aa). Positions 414–500 are tail; that stretch reads EQRLCEGVGS…GSCASVCRKC (87 aa).

Belongs to the intermediate filament family. In terms of assembly, heterotetramer of two type I and two type II keratins.

The polypeptide is Keratin, type II cuticular Hb1 (Bos taurus (Bovine)).